Here is a 296-residue protein sequence, read N- to C-terminus: Probable deoxyuridine 5'-triphosphate nucleotidohydrolase (296 aa).

The stretch at 66 to 102 forms a coiled coil; the sequence is EIDKNIVKNLEDKVNCLEQDVQYLKNELKKKDADWQQ.

It belongs to the dUTPase family.

The enzyme catalyses dUTP + H2O = dUMP + diphosphate + H(+). It participates in pyrimidine metabolism; dUMP biosynthesis; dUMP from dCTP (dUTP route): step 2/2. This enzyme is involved in nucleotide metabolism: it produces dUMP, the immediate precursor of thymidine nucleotides and it decreases the intracellular concentration of dUTP so that uracil cannot be incorporated into DNA. The polypeptide is Probable deoxyuridine 5'-triphosphate nucleotidohydrolase (Acheta domesticus (House cricket)).